Reading from the N-terminus, the 109-residue chain is Large ribosomal subunit protein uL22 (109 aa).

Positions 84–95 (ARGTASRIRKPT) are enriched in basic residues. The tract at residues 84-109 (ARGTASRIRKPTSHIMVEVSKPSKEA) is disordered.

The protein belongs to the universal ribosomal protein uL22 family. In terms of assembly, part of the 50S ribosomal subunit.

This protein binds specifically to 23S rRNA; its binding is stimulated by other ribosomal proteins, e.g. L4, L17, and L20. It is important during the early stages of 50S assembly. It makes multiple contacts with different domains of the 23S rRNA in the assembled 50S subunit and ribosome. Functionally, the globular domain of the protein is located near the polypeptide exit tunnel on the outside of the subunit, while an extended beta-hairpin is found that lines the wall of the exit tunnel in the center of the 70S ribosome. This is Large ribosomal subunit protein uL22 from Campylobacter hominis (strain ATCC BAA-381 / DSM 21671 / CCUG 45161 / LMG 19568 / NCTC 13146 / CH001A).